A 116-amino-acid chain; its full sequence is Ly-6/neurotoxin-like protein 1 (116 aa).

An N-terminal signal peptide occupies residues 1 to 20 (MTPLLTLILVVLMGLPLAQA). Residues 21–107 (LDCHVCAYNG…TPATLALAPI (87 aa)) enclose the UPAR/Ly6 domain. Disulfide bonds link C23–C46, C26–C33, C39–C64, C68–C85, and C86–C91. C91 is lipidated: GPI-anchor amidated cysteine. Residues 92–116 (NGTGLATPATLALAPILLATLWGLL) constitute a propeptide, removed in mature form.

In terms of assembly, interacts with nAChRs containing alpha-4:beta-2 (CHRNA4:CHRNB2) and alpha-7 (CHRNA7) subunits. Interacts with CHRNA4 probably in the endoplasmic reticulum prior to nAChR pentameric assembly. Interacts with KCNA2/Potassium voltage-gated channel subfamily A member 2.

Its subcellular location is the cell membrane. The protein localises to the cell projection. The protein resides in the dendrite. It localises to the endoplasmic reticulum. In terms of biological role, acts in different tissues through interaction to nicotinic acetylcholine receptors (nAChRs). The proposed role as modulator of nAChR activity seems to be dependent on the nAChR subtype and stoichiometry, and to involve an effect on nAChR trafficking and its cell surface expression, and on single channel properties of the nAChR inserted in the plasma membrane. Modulates functional properties of nicotinic acetylcholine receptors (nAChRs) to prevent excessive excitation, and hence neurodegeneration. Enhances desensitization by increasing both the rate and extent of desensitization of alpha-4:beta-2-containing nAChRs and slowing recovery from desensitization. Promotes large amplitude ACh-evoked currents through alpha-4:beta-2 nAChRs. Is involved in regulation of the nAChR pentameric assembly in the endoplasmic reticulum. Shifts stoichiometry from high sensitivity alpha-4(2):beta-2(3) to low sensitivity alpha-4(3):beta-2(2) nAChR. In vitro modulates alpha-3:beta-4-containing nAChRs. Reduces cell surface expression of (alpha-3:beta-4)(2):beta-4 and (alpha-3:beta-4)(2):alpha-5 nAChRs suggesting an interaction with nAChR alpha-3(-):(+)beta-4 subunit interfaces and an allosteric mode. Corresponding single channel effects characterized by decreased unitary conductance, altered burst proportions and enhanced desensitization/inactivation seem to depend on nAChR alpha:alpha subunit interfaces and are greater in (alpha-3:beta-2)(2):alpha-3 when compared to (alpha-3:beta-2)(2):alpha-5 nAChRs. Prevents plasticity in the primary visual cortex late in life. The chain is Ly-6/neurotoxin-like protein 1 from Homo sapiens (Human).